The sequence spans 395 residues: ATP phosphoribosyltransferase regulatory subunit (395 aa).

It belongs to the class-II aminoacyl-tRNA synthetase family. HisZ subfamily. Heteromultimer composed of HisG and HisZ subunits.

It is found in the cytoplasm. It participates in amino-acid biosynthesis; L-histidine biosynthesis; L-histidine from 5-phospho-alpha-D-ribose 1-diphosphate: step 1/9. In terms of biological role, required for the first step of histidine biosynthesis. May allow the feedback regulation of ATP phosphoribosyltransferase activity by histidine. The sequence is that of ATP phosphoribosyltransferase regulatory subunit from Pseudomonas entomophila (strain L48).